We begin with the raw amino-acid sequence, 261 residues long: Lysosome-associated membrane glycoprotein 5 (261 aa).

Residues 1–29 (MDLQGRAVPSVDRLRVLLMLFHTMAQIMA) form the signal peptide. At 30 to 234 (EQEVENLSGL…AVDEREQLEE (205 aa)) the chain is on the extracellular side. Residues Asn35, Asn53, and Asn126 are each glycosylated (N-linked (GlcNAc...) asparagine). Residues 235–255 (TLPLILGLILGLVIVVTLAIY) traverse the membrane as a helical segment. The Cytoplasmic segment spans residues 256-261 (HVHPQK).

This sequence belongs to the LAMP family. Glycosylated.

The protein localises to the cytoplasmic vesicle membrane. The protein resides in the cell membrane. It is found in the cell projection. Its subcellular location is the dendrite. It localises to the cytoplasmic vesicle. The protein localises to the secretory vesicle. The protein resides in the synaptic vesicle membrane. It is found in the growth cone membrane. Its subcellular location is the early endosome membrane. It localises to the recycling endosome. The protein localises to the endoplasmic reticulum-Golgi intermediate compartment membrane. The protein resides in the endosome membrane. In terms of biological role, plays a role in short-term synaptic plasticity in a subset of GABAergic neurons in the brain. This chain is Lysosome-associated membrane glycoprotein 5 (LAMP5), found in Pongo abelii (Sumatran orangutan).